The primary structure comprises 556 residues: Formate--tetrahydrofolate ligase (556 aa).

An ATP-binding site is contributed by 65–72 (TPAGEGKT).

The protein belongs to the formate--tetrahydrofolate ligase family.

It catalyses the reaction (6S)-5,6,7,8-tetrahydrofolate + formate + ATP = (6R)-10-formyltetrahydrofolate + ADP + phosphate. Its pathway is one-carbon metabolism; tetrahydrofolate interconversion. This chain is Formate--tetrahydrofolate ligase, found in Clostridium cylindrosporum.